Reading from the N-terminus, the 349-residue chain is Interleukin-10 receptor subunit beta (349 aa).

The first 19 residues, 1–19 (MAPCVAGWLGGFLLVPALG), serve as a signal peptide directing secretion. Residues 20-220 (MIPPPEKVRM…RTGNDEITPS (201 aa)) lie on the Extracellular side of the membrane. 2 Fibronectin type-III domains span residues 23 to 111 (PPEK…VEDT) and 112 to 215 (IIGP…TGND). N-linked (GlcNAc...) asparagine glycosylation occurs at Asn49. A disulfide bridge connects residues Cys66 and Cys74. Residues Asn102, Asn161, and Asn199 are each glycosylated (N-linked (GlcNAc...) asparagine). The cysteines at positions 188 and 209 are disulfide-linked. A helical transmembrane segment spans residues 221–241 (WIVAIILIVSVLVVFLFLLGC). Residues 242–349 (FVVLWLIYKK…PKLLTSTSEV (108 aa)) lie on the Cytoplasmic side of the membrane. Phosphoserine is present on Ser299. A disordered region spans residues 300–349 (EESEGSKQSPEDNCASEPPSDPGPRELESKDEAPSPPHDDPKLLTSTSEV). Basic and acidic residues predominate over residues 322 to 341 (GPRELESKDEAPSPPHDDPK).

This sequence belongs to the type II cytokine receptor family. As to quaternary structure, heterodimer with IFNLR1.

The protein localises to the membrane. Shared cell surface receptor required for the activation of five class 2 cytokines: IL10, IL22, IL26, IL28, and IFNL1. The IFNLR1/IL10RB dimer is a receptor for the cytokine ligands IFNL2 and IFNL3 and mediates their antiviral activity. The ligand/receptor complex stimulate the activation of the JAK/STAT signaling pathway leading to the expression of IFN-stimulated genes (ISG), which contribute to the antiviral state. The protein is Interleukin-10 receptor subunit beta (Il10rb) of Mus musculus (Mouse).